The following is a 46-amino-acid chain: Iota-conotoxin-like Fi11.8 (46 aa).

4-hydroxyproline is present on residues Pro2 and Pro11. 4 disulfide bridges follow: Cys5-Cys19, Cys12-Cys22, Cys18-Cys27, and Cys21-Cys38. Pro29 is subject to 4-hydroxyproline. Trp33 carries the 6'-bromotryptophan modification. Phe44 is modified (D-phenylalanine).

It belongs to the conotoxin I1 superfamily. As to expression, expressed by the venom duct.

The protein localises to the secreted. Iota-conotoxins bind to voltage-gated sodium channels (Nav) and act as agonists by shifting the voltage-dependence of activation to more hyperpolarized levels. Produces general excitatory symptoms. In Conus figulinus (Fig cone), this protein is Iota-conotoxin-like Fi11.8.